Here is a 647-residue protein sequence, read N- to C-terminus: MSHQSDLIATDIDAYLKQHEQKQLLRFITCGSVDDGKSTLIGRLLYDSKLVYEDELAKVQSDSVRQGSVAGGFDPSLFMDGLKEEREQGITIDVAYRYFSTAKRKFIIADTPGHEQYTRNMATGASSADLAIILIDARHGVLTQTRRHSFIVSLLGIRHVVVAVNKMDIDGVDYSEDRFNEICDDYRSFATRLDLPDLHFIPISALNGDNLVDRSENMPWYTGSTLMNFLETVYIGSDRNLQDFRLPVQLVNRPNLNFRGFCGTIASGIIRKGEEITVLPSRQKSKVKEIVTYDGNLDEAYAPLAVTLTLEDEIDASRGDMIVRSGNLPRSESDVEAMLVWMNEEAMVPGKTYLVKHSTQTVPGNVETLAYKVDVNDLHRMPAPTLELNEIGRVRLSLSAPIHHDPYRRNRTTGAIILVDRITNATVAAGMILDRGTTGSHKSVWDDEVSTDDSSDALSTVTTEERAARFGQKPATVLLTGLTGSGKTSIARAVERKLFDAGRSVAVVDGEFVRRGLSRDLGFSADDRSENLRRSGHLAHTLNDAGLICLASLVAPSDDVRQKVGKLIGEDQFLVVHVATPLDVCRERDTKGQYAKADAGELSNFPGVTAKYDVPTNPDLAVDASTTSIAECADAVVELLKLKGFIK.

The tract at residues 1 to 472 is sulfate adenylyltransferase; that stretch reads MSHQSDLIAT…TEERAARFGQ (472 aa). The region spanning 22–239 is the tr-type G domain; sequence KQLLRFITCG…LETVYIGSDR (218 aa). A G1 region spans residues 31–38; the sequence is GSVDDGKS. A GTP-binding site is contributed by 31–38; it reads GSVDDGKS. Residues 89-93 are G2; sequence GITID. The interval 110–113 is G3; that stretch reads DTPG. GTP is bound by residues 110-114 and 165-168; these read DTPGH and NKMD. Residues 165 to 168 are G4; that stretch reads NKMD. The interval 204-206 is G5; it reads SAL. Residues 473–614 form an adenylyl-sulfate kinase region; it reads KPATVLLTGL…FPGVTAKYDV (142 aa). Residue 481–488 participates in ATP binding; it reads GLTGSGKT.

It in the C-terminal section; belongs to the APS kinase family. This sequence in the N-terminal section; belongs to the TRAFAC class translation factor GTPase superfamily. Classic translation factor GTPase family. CysN/NodQ subfamily. Heterodimer composed of CysD, the smaller subunit, and CysNC.

It catalyses the reaction sulfate + ATP + H(+) = adenosine 5'-phosphosulfate + diphosphate. The catalysed reaction is adenosine 5'-phosphosulfate + ATP = 3'-phosphoadenylyl sulfate + ADP + H(+). Its pathway is sulfur metabolism; hydrogen sulfide biosynthesis; sulfite from sulfate: step 1/3. It functions in the pathway sulfur metabolism; hydrogen sulfide biosynthesis; sulfite from sulfate: step 2/3. Its function is as follows. With CysD forms the ATP sulfurylase (ATPS) that catalyzes the adenylation of sulfate producing adenosine 5'-phosphosulfate (APS) and diphosphate, the first enzymatic step in sulfur assimilation pathway. APS synthesis involves the formation of a high-energy phosphoric-sulfuric acid anhydride bond driven by GTP hydrolysis by CysN coupled to ATP hydrolysis by CysD. APS kinase catalyzes the synthesis of activated sulfate. The polypeptide is Bifunctional enzyme CysN/CysC (cysNC) (Rhodopirellula baltica (strain DSM 10527 / NCIMB 13988 / SH1)).